The primary structure comprises 173 residues: Crossover junction endodeoxyribonuclease RuvC (173 aa).

Catalysis depends on residues Asp8, Glu67, and Asp139. Mg(2+)-binding residues include Asp8, Glu67, and Asp139.

Belongs to the RuvC family. Homodimer which binds Holliday junction (HJ) DNA. The HJ becomes 2-fold symmetrical on binding to RuvC with unstacked arms; it has a different conformation from HJ DNA in complex with RuvA. In the full resolvosome a probable DNA-RuvA(4)-RuvB(12)-RuvC(2) complex forms which resolves the HJ. Mg(2+) serves as cofactor.

The protein localises to the cytoplasm. The enzyme catalyses Endonucleolytic cleavage at a junction such as a reciprocal single-stranded crossover between two homologous DNA duplexes (Holliday junction).. In terms of biological role, the RuvA-RuvB-RuvC complex processes Holliday junction (HJ) DNA during genetic recombination and DNA repair. Endonuclease that resolves HJ intermediates. Cleaves cruciform DNA by making single-stranded nicks across the HJ at symmetrical positions within the homologous arms, yielding a 5'-phosphate and a 3'-hydroxyl group; requires a central core of homology in the junction. The consensus cleavage sequence is 5'-(A/T)TT(C/G)-3'. Cleavage occurs on the 3'-side of the TT dinucleotide at the point of strand exchange. HJ branch migration catalyzed by RuvA-RuvB allows RuvC to scan DNA until it finds its consensus sequence, where it cleaves and resolves the cruciform DNA. The polypeptide is Crossover junction endodeoxyribonuclease RuvC (Erwinia tasmaniensis (strain DSM 17950 / CFBP 7177 / CIP 109463 / NCPPB 4357 / Et1/99)).